Here is a 231-residue protein sequence, read N- to C-terminus: GTP cyclohydrolase III (231 aa).

This sequence belongs to the archaeal-type GTP cyclohydrolase family.

The catalysed reaction is GTP + 3 H2O = 2-amino-5-formylamino-6-(5-phospho-D-ribosylamino)pyrimidin-4(3H)-one + 2 phosphate + 2 H(+). Catalyzes the formation of 2-amino-5-formylamino-6-ribofuranosylamino-4(3H)-pyrimidinone ribonucleotide monophosphate and inorganic phosphate from GTP. Also has an independent pyrophosphate phosphohydrolase activity. The sequence is that of GTP cyclohydrolase III from Saccharolobus solfataricus (strain ATCC 35092 / DSM 1617 / JCM 11322 / P2) (Sulfolobus solfataricus).